A 1188-amino-acid chain; its full sequence is MEPNSLQWVGSPCGLHGPYIFYKAFQFHLEGKPRILSLGDFFFVRCTPKDPICIAELQLLWEERTSRQLLSSSKLYFLPEDTPQGRNSDHGEDEVIAVSEKVIVKLEDLVKWAHSDFSKWRCGLRATPVKTEAFGRNGQKEALLRYRQSTLNSGLNFKDVLKEKADLGEDEEETNVIVLSYPQYCRYRSMLKRIQDKPSSILTDQFALALGGIAVVSRNPQILYCRDTFDHPTLIENESVCDEFAPNLKGRPRKKKTCPQRRDSFSGSKDPNNNCDGKVISKVKGEARSALTKPKNNHNNCKKTSNEEKPKLSIGEECRADEQAFLVALYKYMKERKTPIERIPYLGFKQINLWTMFQAAQKLGGYETITARRQWKHIYDELGGNPGSTSAATCTRRHYERLILPYERFIKGEEDKPLPPIKPRKQENNTQENENKTKVSGNKRIKQEMAKNKKEKENTPKPQDTSEVSSEQRKEEETLNHKSAPEPLPAPEVKGKPEGHKDLGARAPVSRADPEKANETDQGSNSEKEAEEMGDKGLAPLLPSPPLPPEKDSAPTPGAGKQPLASPSTQMDSKQEAKPCCFTESPEKDLQGAPFSSFSATKPPLTSQNEAEEEQLPATANYIANCTVKVDQLGSDDIHTALKQTPKVLVVQSFDMFKDKDLTGPMNENHGLNYTPLLYSRGNPGIMSPLAKKKLLSQVSGASLSSSYPYGSPPPLISKKKLIAREDLCSGLSQGHHSQSSDHTAVSRPSVIQHVQSFKNKASEDRKSINDIFKHDKLSRSDAHRCGFSKHQLGSLADSYILKQETQEGKDKLLEKRAVSHAHVPSFLADFYSSPHLHSLYRHTEHHLHNEQSSKYAARDAYQESENGAFLSHKHPEKIHVNYLASLHLQDKKVAAAEASTDDQPTDLSLPKNPHKLTSKVLGLAHSTSGSQEIKGASQFQVVSNQSRDCHPKACRVSPMTMSGPKKYPESLARSGKPHQVRLENFRKMEGMVHPILHRKMSPQNIGAARPIKRSLEDLDLVIAGKKARAVSPLDPAKEASGKEKASEQESEGNKGAYGGHSGAASEGHKLPLSTPIFPGLYSGSLCNSGLNSRLPAGYSHSLQYLKNQTVLSPLMQPLAFHSLVMQRGIFTSPTNSQQLYRHLAAATPVGSSYGDLLHNSIYPLAGINPQAAFPSSQLSSVHPSTKL.

Residue Lys-130 forms a Glycyl lysine isopeptide (Lys-Gly) (interchain with G-Cter in SUMO2) linkage. A disordered region spans residues 251–278 (RPRKKKTCPQRRDSFSGSKDPNNNCDGK). Ser-264 is modified (phosphoserine). Residues 265-275 (FSGSKDPNNNC) show a composition bias toward polar residues. Positions 319–411 (RADEQAFLVA…LILPYERFIK (93 aa)) constitute an ARID domain. N6,N6-dimethyllysine is present on Lys-337. Residues 413–614 (EEDKPLPPIK…LTSQNEAEEE (202 aa)) are disordered. Basic and acidic residues-rich tracts occupy residues 445–459 (IKQEMAKNKKEKENT), 470–484 (SEQRKEEETLNHKSA), 493–504 (VKGKPEGHKDLG), and 526–535 (SEKEAEEMGD). Lys-446 is covalently cross-linked (Glycyl lysine isopeptide (Lys-Gly) (interchain with G-Cter in SUMO2)). Residues Lys-494 and Lys-496 each participate in a glycyl lysine isopeptide (Lys-Gly) (interchain with G-Cter in SUMO2) cross-link. Positions 594-609 (PFSSFSATKPPLTSQN) are enriched in polar residues. Residues Lys-767, Lys-774, Lys-803, Lys-810, Lys-893, Lys-916, Lys-920, and Lys-935 each participate in a glycyl lysine isopeptide (Lys-Gly) (interchain with G-Cter in SUMO2) cross-link. Positions 958 to 978 (SPMTMSGPKKYPESLARSGKP) are disordered. Residues Lys-988, Lys-1000, and Lys-1013 each participate in a glycyl lysine isopeptide (Lys-Gly) (interchain with G-Cter in SUMO2) cross-link. Residues 1030-1066 (AVSPLDPAKEASGKEKASEQESEGNKGAYGGHSGAAS) form a disordered region. Ser-1032 carries the phosphoserine modification. Basic and acidic residues predominate over residues 1036 to 1048 (PAKEASGKEKASE). Residues Lys-1055 and Lys-1070 each participate in a glycyl lysine isopeptide (Lys-Gly) (interchain with G-Cter in SUMO2) cross-link. Ser-1133 carries the phosphoserine modification.

This sequence belongs to the ARID5B family. In terms of processing, methylation at Lys-337 prevents DNA-binding. Demethylation by PHF2 promotes recruitment of the PHF2-ARID5B complex to promoters. Widely expressed. Expressed in lung, heart, small intestine, kidney, muscle and brain. Also expressed in spleen, thymus, endocrine organs and in uterus and testis.

It localises to the nucleus. Transcription coactivator that binds to the 5'-AATA[CT]-3' core sequence and plays a key role in adipogenesis and liver development. Acts by forming a complex with phosphorylated PHF2, which mediates demethylation at Lys-337, leading to target the PHF2-ARID5B complex to target promoters, where PHF2 mediates demethylation of dimethylated 'Lys-9' of histone H3 (H3K9me2), followed by transcription activation of target genes. The PHF2-ARID5B complex acts as a coactivator of HNF4A in liver. Required for adipogenesis: regulates triglyceride metabolism in adipocytes by regulating expression of adipogenic genes. Overexpression leads to induction of smooth muscle marker genes, suggesting that it may also act as a regulator of smooth muscle cell differentiation and proliferation. The protein is AT-rich interactive domain-containing protein 5B (Arid5b) of Mus musculus (Mouse).